A 329-amino-acid polypeptide reads, in one-letter code: Acetyl-coenzyme A carboxylase carboxyl transferase subunit alpha (329 aa).

A CoA carboxyltransferase C-terminal domain is found at 40–294 (QLESLAARRR…RAAIERHLEQ (255 aa)).

The protein belongs to the AccA family. Acetyl-CoA carboxylase is a heterohexamer composed of biotin carboxyl carrier protein (AccB), biotin carboxylase (AccC) and two subunits each of ACCase subunit alpha (AccA) and ACCase subunit beta (AccD).

The protein localises to the cytoplasm. The catalysed reaction is N(6)-carboxybiotinyl-L-lysyl-[protein] + acetyl-CoA = N(6)-biotinyl-L-lysyl-[protein] + malonyl-CoA. Its pathway is lipid metabolism; malonyl-CoA biosynthesis; malonyl-CoA from acetyl-CoA: step 1/1. Its function is as follows. Component of the acetyl coenzyme A carboxylase (ACC) complex. First, biotin carboxylase catalyzes the carboxylation of biotin on its carrier protein (BCCP) and then the CO(2) group is transferred by the carboxyltransferase to acetyl-CoA to form malonyl-CoA. This chain is Acetyl-coenzyme A carboxylase carboxyl transferase subunit alpha, found in Synechococcus sp. (strain CC9605).